The primary structure comprises 647 residues: NADP-dependent malic enzyme, chloroplastic (647 aa).

The transit peptide at 1-61 (MMSLNSSSVV…VDGAVKDVNA (61 aa)) directs the protein to the chloroplast. Catalysis depends on Tyr195, which acts as the Proton donor. Arg248 lines the NAD(+) pocket. The Proton acceptor role is filled by Lys266. A divalent metal cation-binding residues include Glu338, Asp339, and Asp362. Asp362 serves as a coordination point for NAD(+). 391 to 407 (LFLGAGEAGTGIAELIA) serves as a coordination point for NADP(+). Asn503 is an NAD(+) binding site.

Belongs to the malic enzymes family. In terms of assembly, homotetramer. It depends on Mg(2+) as a cofactor. Requires Mn(2+) as cofactor.

It localises to the plastid. It is found in the chloroplast. The catalysed reaction is (S)-malate + NADP(+) = pyruvate + CO2 + NADPH. It carries out the reaction oxaloacetate + H(+) = pyruvate + CO2. Its pathway is photosynthesis; C3 acid pathway. The chloroplastic ME isoform decarboxylates malate shuttled from neighboring mesophyll cells. The CO(2) released is then refixed by ribulose-bisphosphate carboxylase. This pathway eliminates the photorespiratory loss of CO(2) that occurs in most plants. The protein is NADP-dependent malic enzyme, chloroplastic (MODA) of Flaveria pringlei.